A 143-amino-acid polypeptide reads, in one-letter code: Myocilin opposite strand protein (143 aa).

The disordered stretch occupies residues 65 to 111; that stretch reads MATRDETITKKSGEGEEMLPSMGMDHESPSKAHLMVPPAPPPSPADA. Basic and acidic residues predominate over residues 66 to 78; the sequence is ATRDETITKKSGE.

The polypeptide is Myocilin opposite strand protein (Mus musculus (Mouse)).